A 1129-amino-acid polypeptide reads, in one-letter code: A-kinase anchor protein 11 (1129 aa).

Residues Met-1 to Leu-12 show a composition bias toward basic residues. The disordered stretch occupies residues Met-1 to Gln-21. Phosphothreonine is present on residues Thr-251 and Thr-363. 3 disordered regions span residues Ile-354 to Ser-376, Glu-394 to Glu-416, and Ser-434 to Ser-455. Over residues Pro-404–Glu-416 the composition is skewed to polar residues. Phosphoserine occurs at positions 434, 439, and 440. The segment covering Gly-442–Ser-455 has biased composition (basic and acidic residues). Ser-595 is modified (phosphoserine). Thr-742 is subject to Phosphothreonine. Ser-835 is subject to Phosphoserine. Residues Leu-905–Glu-918 form a PKA-RII binding region region. The disordered stretch occupies residues Ser-962 to Pro-1061. Residues Phe-968–Ser-995 are compositionally biased toward polar residues. Residues Asp-1002–Ser-1011 are compositionally biased toward basic and acidic residues. The segment covering Glu-1012 to Gly-1028 has biased composition (low complexity). Residues Asn-1033–Ser-1042 are compositionally biased toward polar residues. Residues Asp-1043–Ala-1056 show a composition bias toward acidic residues.

In terms of tissue distribution, expressed in brain and testis.

It is found in the peroxisome. Binds to type II regulatory subunits of protein kinase A and anchors/targets them. The polypeptide is A-kinase anchor protein 11 (Akap11) (Rattus norvegicus (Rat)).